The chain runs to 458 residues: Biphenyl dioxygenase subunit alpha (458 aa).

Positions 58 to 156 (WLLLGHESHV…KEGDCGFDKA (99 aa)) constitute a Rieske domain. Residues Cys100, His102, Cys120, and His123 each contribute to the [2Fe-2S] cluster site. Fe cation is bound by residues His233 and His239.

Belongs to the bacterial ring-hydroxylating dioxygenase alpha subunit family. In terms of assembly, heterohexamer consisting of three BphA subunits and three BphE subunits. A ferredoxin (BphF) and a ferredoxin reductase (BphG) must be present to obtain activity. The cofactor is [2Fe-2S] cluster. It depends on Fe cation as a cofactor.

It carries out the reaction biphenyl + NADH + O2 + H(+) = (2R,3S)-3-phenylcyclohexa-3,5-diene-1,2-diol + NAD(+). It participates in xenobiotic degradation; biphenyl degradation; 2-hydroxy-2,4-pentadienoate and benzoate from biphenyl: step 1/4. This chain is Biphenyl dioxygenase subunit alpha (bphA), found in Metapseudomonas furukawaii (Pseudomonas furukawaii).